A 416-amino-acid chain; its full sequence is Serine hydroxymethyltransferase (416 aa).

(6S)-5,6,7,8-tetrahydrofolate contacts are provided by residues leucine 121 and 125 to 127 (GHL). Lysine 230 carries the post-translational modification N6-(pyridoxal phosphate)lysine.

It belongs to the SHMT family. As to quaternary structure, homodimer. The cofactor is pyridoxal 5'-phosphate.

Its subcellular location is the cytoplasm. It carries out the reaction (6R)-5,10-methylene-5,6,7,8-tetrahydrofolate + glycine + H2O = (6S)-5,6,7,8-tetrahydrofolate + L-serine. It participates in one-carbon metabolism; tetrahydrofolate interconversion. The protein operates within amino-acid biosynthesis; glycine biosynthesis; glycine from L-serine: step 1/1. Catalyzes the reversible interconversion of serine and glycine with tetrahydrofolate (THF) serving as the one-carbon carrier. This reaction serves as the major source of one-carbon groups required for the biosynthesis of purines, thymidylate, methionine, and other important biomolecules. Also exhibits THF-independent aldolase activity toward beta-hydroxyamino acids, producing glycine and aldehydes, via a retro-aldol mechanism. The chain is Serine hydroxymethyltransferase from Nitrosomonas europaea (strain ATCC 19718 / CIP 103999 / KCTC 2705 / NBRC 14298).